The primary structure comprises 465 residues: Ribulose bisphosphate carboxylase large chain (465 aa).

At Lys-4 the chain carries N6,N6,N6-trimethyllysine. Residues Asn-113 and Thr-163 each coordinate substrate. Residue Lys-165 is the Proton acceptor of the active site. Residue Lys-167 coordinates substrate. Mg(2+)-binding residues include Lys-191, Asp-193, and Glu-194. Residue Lys-191 is modified to N6-carboxylysine. Residue His-284 is the Proton acceptor of the active site. The substrate site is built by Arg-285, His-317, and Ser-369.

The protein belongs to the RuBisCO large chain family. Type I subfamily. Heterohexadecamer of 8 large chains and 8 small chains; disulfide-linked. The disulfide link is formed within the large subunit homodimers. Requires Mg(2+) as cofactor. Post-translationally, the disulfide bond which can form in the large chain dimeric partners within the hexadecamer appears to be associated with oxidative stress and protein turnover.

It is found in the plastid. Its subcellular location is the chloroplast. The enzyme catalyses 2 (2R)-3-phosphoglycerate + 2 H(+) = D-ribulose 1,5-bisphosphate + CO2 + H2O. It carries out the reaction D-ribulose 1,5-bisphosphate + O2 = 2-phosphoglycolate + (2R)-3-phosphoglycerate + 2 H(+). In terms of biological role, ruBisCO catalyzes two reactions: the carboxylation of D-ribulose 1,5-bisphosphate, the primary event in carbon dioxide fixation, as well as the oxidative fragmentation of the pentose substrate in the photorespiration process. Both reactions occur simultaneously and in competition at the same active site. The polypeptide is Ribulose bisphosphate carboxylase large chain (Bursera inaguensis (Elaphrium inaguense)).